A 74-amino-acid chain; its full sequence is Veswaprin-a (74 aa).

Positions 1-24 are cleaved as a signal peptide; the sequence is MSSGGLLLLLGLLTLWAEVTPISG. One can recognise a WAP domain in the interval 27–71; that stretch reads RPKKPGLCPPRPQKPCVKECKNDWSCPGQQKCCNYGCIDECRDPI. 4 disulfides stabilise this stretch: C34–C59, C42–C63, C46–C58, and C52–C67.

This sequence belongs to the venom waprin family. In terms of tissue distribution, expressed by the venom gland.

Its subcellular location is the secreted. Damages membranes of susceptible bacteria. Has no hemolytic activity. Not toxic to mice. Does not inhibit the proteinases elastase and cathepsin G. In Demansia vestigiata (Lesser black whip snake), this protein is Veswaprin-a.